Consider the following 708-residue polypeptide: Capsid scaffolding protein (708 aa).

Active-site charge relay system residues include H63, S132, and H157. 3 disordered regions span residues 270–339 (SAER…MSHP), 455–565 (HPSY…QQQR), and 593–620 (ALPS…GGGE). Residues 284 to 293 (PAAGARVPSS) show a composition bias toward low complexity. A compositionally biased stretch (pro residues) spans 294–311 (SPSPPVEPPSPVQPPALP). A compositionally biased stretch (low complexity) spans 326–339 (SPSEPAEAASMSHP). An interaction with pAP region spans residues 333-352 (AASMSHPLSAAVPAATAPPG). Positions 498-513 (KQHRHGGSGGHNKRRK) are enriched in basic residues. 2 short sequence motifs (nuclear localization signal) span residues 510–515 (KRRKET) and 537–543 (RARKRLK). The segment covering 593–615 (ALPSAASSSPTTTTVCTPTSELT) has biased composition (low complexity). The interaction with major capsid protein stretch occupies residues 688–708 (PPKDMVDLNRRIFVAALNKLE).

The protein belongs to the herpesviridae capsid scaffolding protein family. In terms of assembly, homomultimer. Interacts with major capsid protein. Exists in a monomer-dimer equilibrium with the dimer being the active species. Post-translationally, capsid scaffolding protein is cleaved by assemblin after formation of the spherical procapsid. As a result, the capsid obtains its mature, icosahedral shape. Cleavages occur at two or more sites: release (R-site) and maturation (M-site).

It localises to the host cytoplasm. It is found in the host nucleus. The catalysed reaction is Cleaves -Ala-|-Ser- and -Ala-|-Ala- bonds in the scaffold protein.. In terms of biological role, acts as a scaffold protein by binding major capsid protein in the cytoplasm, inducing the nuclear localization of both proteins. Multimerizes in the nucleus such as major capsid protein forms the icosahedral T=16 capsid. Autocatalytic cleavage releases the assembly protein, and subsequently abolishes interaction with major capsid protein. Cleavages products are evicted from the capsid before or during DNA packaging. Its function is as follows. Protease that plays an essential role in virion assembly within the nucleus. Catalyzes the cleavage of the assembly protein after formation of the spherical procapsid. By that cleavage, the capsid matures and gains its icosahedral shape. The cleavage sites seem to include -Ala-Ser-, -Ala-Ala-, as well as Ala-Thr bonds. Assemblin and cleavages products are evicted from the capsid before or during DNA packaging. Plays a major role in capsid assembly. Acts as a scaffold protein by binding major capsid protein. Multimerizes in the nucleus such as major capsid protein forms the icosahedral T=16 capsid. Cleaved by assemblin after capsid completion. The cleavages products are evicted from the capsid before or during DNA packaging. The protein is Capsid scaffolding protein (UL80) of Homo sapiens (Human).